Here is a 98-residue protein sequence, read N- to C-terminus: Large ribosomal subunit protein uL23 (98 aa).

Belongs to the universal ribosomal protein uL23 family. Part of the 50S ribosomal subunit. Contacts protein L29, and trigger factor when it is bound to the ribosome.

Its function is as follows. One of the early assembly proteins it binds 23S rRNA. One of the proteins that surrounds the polypeptide exit tunnel on the outside of the ribosome. Forms the main docking site for trigger factor binding to the ribosome. The sequence is that of Large ribosomal subunit protein uL23 from Bordetella bronchiseptica (strain ATCC BAA-588 / NCTC 13252 / RB50) (Alcaligenes bronchisepticus).